The sequence spans 435 residues: NADH-quinone oxidoreductase subunit D 2 (435 aa).

This sequence belongs to the complex I 49 kDa subunit family. As to quaternary structure, NDH-1 is composed of 14 different subunits. Subunits NuoB, C, D, E, F, and G constitute the peripheral sector of the complex.

The protein resides in the cell inner membrane. It catalyses the reaction a quinone + NADH + 5 H(+)(in) = a quinol + NAD(+) + 4 H(+)(out). NDH-1 shuttles electrons from NADH, via FMN and iron-sulfur (Fe-S) centers, to quinones in the respiratory chain. The immediate electron acceptor for the enzyme in this species is believed to be ubiquinone. Couples the redox reaction to proton translocation (for every two electrons transferred, four hydrogen ions are translocated across the cytoplasmic membrane), and thus conserves the redox energy in a proton gradient. The chain is NADH-quinone oxidoreductase subunit D 2 from Stenotrophomonas maltophilia (strain R551-3).